The chain runs to 271 residues: Phosphatidylglycerol--prolipoprotein diacylglyceryl transferase (271 aa).

The next 7 membrane-spanning stretches (helical) occupy residues 10–30 (VALAIGPLKIHWYGLMYLVGI), 56–76 (LVFWLSMGVIVGGRLGYVLFY), 92–112 (WKGGMSFHGGFIGVMLAALWF), 120–140 (FFQLMDFVAPMVPIGLGAGRI), 174–194 (PSQLYQFALEGVALFLILWLF), 202–222 (MAVSGMFALFYGIFRFIVEFV), and 237–257 (LTMGQVLCVPMIIGGLFLIWL). R139 contributes to the a 1,2-diacyl-sn-glycero-3-phospho-(1'-sn-glycerol) binding site.

It belongs to the Lgt family.

It localises to the cell inner membrane. The enzyme catalyses L-cysteinyl-[prolipoprotein] + a 1,2-diacyl-sn-glycero-3-phospho-(1'-sn-glycerol) = an S-1,2-diacyl-sn-glyceryl-L-cysteinyl-[prolipoprotein] + sn-glycerol 1-phosphate + H(+). The protein operates within protein modification; lipoprotein biosynthesis (diacylglyceryl transfer). Its function is as follows. Catalyzes the transfer of the diacylglyceryl group from phosphatidylglycerol to the sulfhydryl group of the N-terminal cysteine of a prolipoprotein, the first step in the formation of mature lipoproteins. The chain is Phosphatidylglycerol--prolipoprotein diacylglyceryl transferase from Pseudomonas fluorescens (strain Pf0-1).